A 635-amino-acid polypeptide reads, in one-letter code: Extracellular metalloproteinase 1 (635 aa).

An N-terminal signal peptide occupies residues 1 to 19 (MHGLLLAAGLLSLPLHVLA). Residues 20 to 246 (HPQPSTSTSL…VHNVVDYVAH (227 aa)) constitute a propeptide that is removed on maturation. Asn287 carries N-linked (GlcNAc...) asparagine glycosylation. His430 provides a ligand contact to Zn(2+). The active site involves Glu431. Zn(2+) is bound at residue His434. Asn475, Asn594, and Asn623 each carry an N-linked (GlcNAc...) asparagine glycan.

The protein belongs to the peptidase M36 family. Zn(2+) serves as cofactor.

It is found in the secreted. Secreted metalloproteinase probably acting as a virulence factor. The sequence is that of Extracellular metalloproteinase 1 (MEP1) from Trichophyton tonsurans (Scalp ringworm fungus).